The primary structure comprises 443 residues: Na(+)-translocating ferredoxin:NAD(+) oxidoreductase complex subunit C (443 aa).

2 4Fe-4S ferredoxin-type domains span residues 359–391 (ESAKIATPSNCIHCGKCVGVCPIHLQPLNIAEY) and 398–428 (DKCESNNAMDCIECGSCSYICPAKRTLVSSI). C369, C372, C375, C379, C408, C411, C414, and C418 together coordinate [4Fe-4S] cluster.

The protein belongs to the 4Fe4S bacterial-type ferredoxin family. RnfC subfamily. In terms of assembly, the complex is composed of six subunits: RnfA, RnfB, RnfC, RnfD, RnfE and RnfG. It depends on [4Fe-4S] cluster as a cofactor.

The protein localises to the cell membrane. The catalysed reaction is 2 reduced [2Fe-2S]-[ferredoxin] + Na(+)(in) + NAD(+) + H(+) = 2 oxidized [2Fe-2S]-[ferredoxin] + Na(+)(out) + NADH. Functionally, part of a membrane-bound complex that couples electron transfer with translocation of ions across the membrane. Couples electron transfer from reduced ferredoxin to NAD(+) with electrogenic movement of Na(+) out of the cell. Involved in caffeate respiration. The polypeptide is Na(+)-translocating ferredoxin:NAD(+) oxidoreductase complex subunit C (Acetobacterium woodii (strain ATCC 29683 / DSM 1030 / JCM 2381 / KCTC 1655 / WB1)).